A 506-amino-acid chain; its full sequence is Maturase K (506 aa).

It belongs to the intron maturase 2 family. MatK subfamily.

The protein localises to the plastid. Its subcellular location is the chloroplast. In terms of biological role, usually encoded in the trnK tRNA gene intron. Probably assists in splicing its own and other chloroplast group II introns. This chain is Maturase K, found in Gaultheria procumbens (Wintergreen).